We begin with the raw amino-acid sequence, 525 residues long: GMP synthase [glutamine-hydrolyzing] (525 aa).

Residues 3 to 200 (KILILDFGSQ…VLHVAGCKPS (198 aa)) form the Glutamine amidotransferase type-1 domain. Catalysis depends on C79, which acts as the Nucleophile. Active-site residues include H174 and E176. The 193-residue stretch at 201 to 393 (WTMPNYIDEA…LGLPHDMVYR (193 aa)) folds into the GMPS ATP-PPase domain. 228–234 (SGGVDSS) serves as a coordination point for ATP.

As to quaternary structure, homodimer.

It catalyses the reaction XMP + L-glutamine + ATP + H2O = GMP + L-glutamate + AMP + diphosphate + 2 H(+). It functions in the pathway purine metabolism; GMP biosynthesis; GMP from XMP (L-Gln route): step 1/1. Its function is as follows. Catalyzes the synthesis of GMP from XMP. The polypeptide is GMP synthase [glutamine-hydrolyzing] (Chromobacterium violaceum (strain ATCC 12472 / DSM 30191 / JCM 1249 / CCUG 213 / NBRC 12614 / NCIMB 9131 / NCTC 9757 / MK)).